The sequence spans 470 residues: Glucose-1-phosphate adenylyltransferase (470 aa).

Residues Gly165, 182–183 (EK), and Ser200 each bind alpha-D-glucose 1-phosphate.

It belongs to the bacterial/plant glucose-1-phosphate adenylyltransferase family. As to quaternary structure, homotetramer.

The catalysed reaction is alpha-D-glucose 1-phosphate + ATP + H(+) = ADP-alpha-D-glucose + diphosphate. The protein operates within glycan biosynthesis; glycogen biosynthesis. Its function is as follows. Involved in the biosynthesis of ADP-glucose, a building block required for the elongation reactions to produce glycogen. Catalyzes the reaction between ATP and alpha-D-glucose 1-phosphate (G1P) to produce pyrophosphate and ADP-Glc. In Paenarthrobacter aurescens (strain TC1), this protein is Glucose-1-phosphate adenylyltransferase.